Here is a 1196-residue protein sequence, read N- to C-terminus: NACHT, LRR and PYD domains-containing protein 1b allele 5 (1196 aa).

The disordered stretch occupies residues 1-22 (MEESPPKQKSNTKVTQHEGQQD). Positions 126 to 435 (QLVIIEGAAG…EFFAAISCIL (310 aa)) constitute an NACHT domain. ATP is bound at residue 132 to 139 (GAAGIGKS). LRR repeat units lie at residues 627-647 (NLEG…QSLC) and 684-704 (SLTE…RMLC). The interval 789-922 (FWGPTGPVAT…GYTVLKNPSF (134 aa)) is ZU5. The FIIND domain occupies 789–1072 (FWGPTGPVAT…KFDHLCDQEF (284 aa)). The interval 923–1072 (SPMGVVLRII…KFDHLCDQEF (150 aa)) is UPA. Residues 1106–1189 (HFMDQHREQL…HLVMDLFEKS (84 aa)) enclose the CARD domain.

The protein belongs to the NLRP family. Interacts with DPP9; leading to inhibit activation of the inflammasome. DPP9 acts via formation of a ternary complex, composed of a DPP9 homodimer, one full-length Nlrp1b protein, and one cleaved C-terminus of Nlrp1b (NACHT, LRR and PYD domains-containing protein 1b, C-terminus). Interacts with DPP8; leading to inhibit activation of the inflammasome, probably via formation of a ternary complex with DPP8. Interacts (via LRR repeats) with BCL2 and BCL2L1 (via the loop between motifs BH4 and BH3). Interacts with NOD2; this interaction may increase IL1B release. Interacts with EIF2AK2/PKR; this interaction requires EIF2AK2 activity, is accompanied by EIF2AK2 autophosphorylation and promotes inflammasome assembly in response to B.anthracis lethal toxin. Interacts with MEFV; this interaction targets Nlrp1b to degradation by autophagy, hence preventing excessive IL1B- and IL18-mediated inflammation. As to quaternary structure, interacts with the C-terminal part of Nlrp1b (NACHT, LRR and PYD domains-containing protein 1b, C-terminus) in absence of pathogens and other damage-associated signals. In terms of assembly, interacts with the N-terminal part of Nlrp1b (NACHT, LRR and PYD domains-containing protein 1b, N-terminus) in absence of pathogens and other damage-associated signals. Homomultimer; forms the Nlrp1b inflammasome polymeric complex, a filament composed of homopolymers of this form in response to pathogens and other damage-associated signals. The Nlrp1b inflammasome polymeric complex directly recruits pro-caspase-1 (proCASP1) independently of PYCARD/ASC. Interacts (via CARD domain) with CASP1 (via CARD domain); leading to CASP1 activation. Post-translationally, autocatalytically cleaved. Autocatalytic cleavage in FIIND region occurs constitutively, prior to activation signals, and is required for inflammasome activity (IL1B release), possibly by facilitating CASP1 binding. Both N- and C-terminal parts remain associated non-covalently. In terms of processing, ubiquitinated by the N-end rule pathway in response to pathogens and other damage-associated signals, leading to its degradation by the proteasome and subsequent release of the cleaved C-terminal part of the protein (NACHT, LRR and PYD domains-containing protein 1b, C-terminus), which polymerizes and forms the Nlrp1b inflammasome. (Microbial infection) Cleavage by B.anthracis lethal toxin (LT) endopeptidase promotes ubiquitination and degradation of the N-terminal part, releasing the cleaved C-terminal part of the protein (NACHT, LRR and PYD domains-containing protein 1b, C-terminus), which polymerizes and forms the Nlrp1b inflammasome. Expressed in macrophages.

The protein resides in the cytoplasm. It is found in the cytosol. Its subcellular location is the inflammasome. With respect to regulation, activated by cleavage by B.anthracis lethal toxin (LT) endopeptidase. Cleavage by LT promotes ubiquitination and degradation of the N-terminal part, releasing the cleaved C-terminal part of the protein (NACHT, LRR and PYD domains-containing protein 1b, C-terminus), which polymerizes and forms the Nlrp1b inflammasome. Nlrp1b inflammasome is inhibited by DPP8 and DPP9, which sequester the C-terminal fragment of Nlrp1b (NACHT, LRR and PYD domains-containing protein 1b, C-terminus) in a ternary complex, thereby preventing Nlrp1b oligomerization and activation. Nlrp1b inflammasome is activated by Val-boroPro (Talabostat, PT-100), an inhibitor of dipeptidyl peptidases DPP8 and DPP9. Val-boroPro relieves inhibition of DPP8 and/or DPP9 by promoting disruption of the ternary complex, releasing its C-terminal part from autoinhibition. Activated by metabolic inhibitors, such as 2-deoxy-D-glucose and sodium azide. Not activated by muramyl dipeptide, nor by full-length bacterial peptidoglycan. Its function is as follows. Acts as the sensor component of the Nlrp1b inflammasome, which mediates inflammasome activation in response to various pathogen-associated signals, leading to subsequent pyroptosis. Inflammasomes are supramolecular complexes that assemble in the cytosol in response to pathogens and other damage-associated signals and play critical roles in innate immunity and inflammation. Acts as a recognition receptor (PRR): recognizes specific pathogens and other damage-associated signals, such as B.anthracis lethal toxin (LT) or Val-boroPro inhibitor, and mediates the formation of the inflammasome polymeric complex. In response to pathogen-associated signals, the N-terminal part of Nlrp1b is degraded by the proteasome, releasing the cleaved C-terminal part of the protein (NACHT, LRR and PYD domains-containing protein 1b, C-terminus), which polymerizes to initiate the formation of the inflammasome complex: the inflammasome directly recruits pro-caspase-1 (proCASP1) independently of PYCARD/ASC and promotes caspase-1 (CASP1) activation, which subsequently cleaves and activates inflammatory cytokines IL1B and IL18 and gasdermin-D (GSDMD), leading to pyroptosis. In the absence of GSDMD expression, the Nlrp1b inflammasome is able to recruit and activate CASP8, leading to activation of gasdermin-E (GSDME). Activation of Nlrp1b inflammasome is also required for HMGB1 secretion; the active cytokines and HMGB1 stimulate inflammatory responses. Primary mediator of macrophage susceptibility to B.anthracis LT: in response to B.anthracis infection, macrophages and dendritic cells release IL1B and undergo pyroptosis. This early inflammatory response to the toxin increases resistance to infection by B.anthracis spores. In terms of biological role, constitutes the precursor of the Nlrp1b inflammasome, which mediates autoproteolytic processing within the FIIND domain to generate the N-terminal and C-terminal parts, which are associated non-covalently in absence of pathogens and other damage-associated signals. Regulatory part that prevents formation of the Nlrp1b inflammasome: in absence of pathogens and other damage-associated signals, interacts with the C-terminal part of Nlrp1b (NACHT, LRR and PYD domains-containing protein 1b, C-terminus), preventing activation of the Nlrp1b inflammasome. In response to pathogen-associated signals, this part is ubiquitinated by the N-end rule pathway and degraded by the proteasome, releasing the cleaved C-terminal part of the protein, which polymerizes and forms the Nlrp1b inflammasome. Functionally, constitutes the active part of the Nlrp1b inflammasome. In absence of pathogens and other damage-associated signals, interacts with the N-terminal part of Nlrp1b (NACHT, LRR and PYD domains-containing protein 1b, N-terminus), preventing activation of the Nlrp1b inflammasome. In response to pathogen-associated signals, the N-terminal part of Nlrp1b is degraded by the proteasome, releasing this form, which polymerizes to form the Nlrp1b inflammasome complex: the Nlrp1b inflammasome complex then directly recruits pro-caspase-1 (proCASP1) and promotes caspase-1 (CASP1) activation, leading to gasdermin-D (GSDMD) cleavage and subsequent pyroptosis. The sequence is that of NACHT, LRR and PYD domains-containing protein 1b allele 5 (Nlrp1b) from Mus musculus (Mouse).